The primary structure comprises 298 residues: Ribosomal protein uL3 glutamine methyltransferase (298 aa).

This sequence belongs to the protein N5-glutamine methyltransferase family. PrmB subfamily.

The catalysed reaction is L-glutaminyl-[ribosomal protein uL3] + S-adenosyl-L-methionine = N(5)-methyl-L-glutaminyl-[ribosomal protein uL3] + S-adenosyl-L-homocysteine + H(+). Methylates large ribosomal subunit protein uL3 on a specific glutamine residue. The chain is Ribosomal protein uL3 glutamine methyltransferase from Bordetella pertussis (strain Tohama I / ATCC BAA-589 / NCTC 13251).